The primary structure comprises 545 residues: Chaperonin GroEL (545 aa).

Residues 30–33 (TLGP), K51, 87–91 (DGTTT), G415, 479–481 (NAA), and D495 contribute to the ATP site.

The protein belongs to the chaperonin (HSP60) family. Forms a cylinder of 14 subunits composed of two heptameric rings stacked back-to-back. Interacts with the co-chaperonin GroES.

The protein localises to the cytoplasm. The enzyme catalyses ATP + H2O + a folded polypeptide = ADP + phosphate + an unfolded polypeptide.. In terms of biological role, together with its co-chaperonin GroES, plays an essential role in assisting protein folding. The GroEL-GroES system forms a nano-cage that allows encapsulation of the non-native substrate proteins and provides a physical environment optimized to promote and accelerate protein folding. This Salmonella agona (strain SL483) protein is Chaperonin GroEL.